The following is a 128-amino-acid chain: Large ribosomal subunit protein bL17 (128 aa).

This sequence belongs to the bacterial ribosomal protein bL17 family. Part of the 50S ribosomal subunit. Contacts protein L32.

The protein is Large ribosomal subunit protein bL17 of Streptococcus thermophilus (strain ATCC BAA-250 / LMG 18311).